Here is a 515-residue protein sequence, read N- to C-terminus: Ecdysteroid UDP-glucosyltransferase (515 aa).

The N-terminal stretch at 1–31 (MKMIILVVSLHVLRNSAAVRVLCMFPTPSYS) is a signal peptide.

Belongs to the UDP-glycosyltransferase family.

Catalyzes the transfer of glucose from UDP-glucose to ecdysteroids which are insect molting hormones. Expression of egt interferes with normal insect development and block molting. The sequence is that of Ecdysteroid UDP-glucosyltransferase (EGT) from Spodoptera littoralis nuclear polyhedrosis virus (SlNPV).